Consider the following 893-residue polypeptide: Protein FAM186B (893 aa).

5 disordered regions span residues G177–T207, Q327–M376, L537–R557, L574–M611, and K806–Y827. Composition is skewed to polar residues over residues Q179–S188 and Q197–T207. Residues R303 to L331 adopt a coiled-coil conformation. Over residues S342–V353 the composition is skewed to basic and acidic residues.

The protein belongs to the FAM186 family.

This Homo sapiens (Human) protein is Protein FAM186B (FAM186B).